Reading from the N-terminus, the 592-residue chain is Vacuolin-B (592 aa).

Polar residues predominate over residues 1-30 (MIESSSFMKKTSSENSIGSRSNIHEASTFS). Positions 1–35 (MIESSSFMKKTSSENSIGSRSNIHEASTFSSEHEN) are disordered. Positions 480–534 (KTTEARLKAETDNIALEQKGKAIIAEAQAKLESAQKQAQALLITAEAQKKVQEMQ) form a coiled coil. The segment at 491–555 (DNIALEQKGK…EIELAKIKSE (65 aa)) is oligomerization domain.

Belongs to the vacuolin family. As to quaternary structure, homotrimer.

Its subcellular location is the endosome membrane. It localises to the lysosome membrane. Functionally, negative regulator of late steps of the endocytic pathway. This chain is Vacuolin-B (vacB), found in Dictyostelium discoideum (Social amoeba).